The sequence spans 434 residues: D-amino acid dehydrogenase (434 aa).

Residue 3-17 coordinates FAD; that stretch reads VVILGSGVVGVTSAW.

It belongs to the DadA oxidoreductase family. FAD serves as cofactor.

The enzyme catalyses a D-alpha-amino acid + A + H2O = a 2-oxocarboxylate + AH2 + NH4(+). Its pathway is amino-acid degradation; D-alanine degradation; NH(3) and pyruvate from D-alanine: step 1/1. Functionally, oxidative deamination of D-amino acids. This is D-amino acid dehydrogenase from Yersinia pseudotuberculosis serotype O:3 (strain YPIII).